The chain runs to 442 residues: MKKVFIRTFGCQMNEYDSDKMLAVLAEEHGGIEQVTQADEADIILFNTCSVREKAQEKVFSDLGRVRPLKEKNPGLIIGVAGCVASQEGENIIKRAPYVDVVFGPQTLHRLPKMIVDKETSGLSQVDISFPEIEKFDHLPPARVEGGAAFVSIMEGCSKYCSFCVVPYTRGEEFSRPLNDVLTEIANLAQQGVKEINLLGQNVNAYRGEMDDGEICDFATLLRIVHEIPGIERMRFTTSHPREFTDSIIECYRDLPKLVSHLHLPIQSGSDRVLSAMKRGYTALEYKSIIRKLRAIRPDLCLSSDFIVGFPGETEREFEQTLKLVKDIAFDLSFVFIYSPRPGTPAANLHDDTPHEEKVRRLEALNEVIEAETARINQTMIGTVQRCLVEGISKKDPDQLQARTANNRVVNFTGTPDMINQMIDLEITEAYTFSLRGKVVEA.

An MTTase N-terminal domain is found at lysine 2–threonine 120. [4Fe-4S] cluster-binding residues include cysteine 11, cysteine 49, cysteine 83, cysteine 157, cysteine 161, and cysteine 164. Residues arginine 143–arginine 375 form the Radical SAM core domain. One can recognise a TRAM domain in the interval glutamine 378 to glutamate 441.

It belongs to the methylthiotransferase family. MiaB subfamily. Monomer. It depends on [4Fe-4S] cluster as a cofactor.

It localises to the cytoplasm. The catalysed reaction is N(6)-dimethylallyladenosine(37) in tRNA + (sulfur carrier)-SH + AH2 + 2 S-adenosyl-L-methionine = 2-methylsulfanyl-N(6)-dimethylallyladenosine(37) in tRNA + (sulfur carrier)-H + 5'-deoxyadenosine + L-methionine + A + S-adenosyl-L-homocysteine + 2 H(+). Its function is as follows. Catalyzes the methylthiolation of N6-(dimethylallyl)adenosine (i(6)A), leading to the formation of 2-methylthio-N6-(dimethylallyl)adenosine (ms(2)i(6)A) at position 37 in tRNAs that read codons beginning with uridine. This Neisseria meningitidis serogroup C / serotype 2a (strain ATCC 700532 / DSM 15464 / FAM18) protein is tRNA-2-methylthio-N(6)-dimethylallyladenosine synthase.